The sequence spans 342 residues: Outer spore wall protein RRT8 (342 aa).

The Cytoplasmic portion of the chain corresponds to 1 to 109 (MKAGIELISH…VLTNPVYWKH (109 aa)). A helical transmembrane segment spans residues 110 to 130 (ILLFAVCYALIFVTIAGLFYV). Residue Thr131 is a topological domain, extracellular. The chain crosses the membrane as a helical span at residues 132 to 152 (LVPLLVTWAILLLGPLGVILV). The Cytoplasmic segment spans residues 153–240 (HIQWILQTNV…PRLLFRMFFK (88 aa)). The helical transmembrane segment at 241 to 261 (VSNFTSLTLLSLIPIVGPILA) threads the bilayer. Residues 262-299 (NQLMAPKRTFTYLQRYFLLKGFSKKQAKDFQYEHYASF) are Extracellular-facing. A helical transmembrane segment spans residues 300–320 (ICFGMSAGLLELIPFFTIVTI). Over 321–342 (SSNTVGAAKWCTSLLKGERKKE) the chain is Cytoplasmic.

This sequence belongs to the LDS family.

It localises to the prospore membrane. It is found in the lipid droplet. The protein resides in the spore wall. In terms of biological role, involved in spore wall assembly. May be involved in the modulation of rDNA transcription. This chain is Outer spore wall protein RRT8, found in Saccharomyces cerevisiae (strain ATCC 204508 / S288c) (Baker's yeast).